The primary structure comprises 582 residues: Transcription factor tau subunit sfc6 (582 aa).

The tract at residues M1–L97 is disordered. Positions E18–I39 are enriched in acidic residues. Over residues Q63–G87 the composition is skewed to polar residues. WD repeat units lie at residues T221 to S262, H268 to H314, and F326 to L369.

As to quaternary structure, component of the TFIIIC complex including sfc1, sfc3, sfc4, sfc6 and sfc7. The subunits are organized in two globular domains, tauA and tauB, connected by a proteolysis-sensitive and flexible linker. Interacts with sfc1, sfc3 and sfc4.

It localises to the nucleus. In terms of biological role, TFIIIC mediates tRNA and 5S RNA gene activation by binding to intragenic promoter elements. Upstream of the transcription start site, TFIIIC assembles the initiation complex TFIIIB-TFIIIC-tDNA, which is sufficient for RNA polymerase III recruitment and function. Part of the tauB domain of TFIIIC that binds boxB DNA promoter sites of tRNA and similar genes. Cooperates with sfc3 in DNA binding. Localizes to chromatin insulator sequence without recruiting RNA polymerase III and plays a role in nuclear organization. This chain is Transcription factor tau subunit sfc6, found in Schizosaccharomyces pombe (strain 972 / ATCC 24843) (Fission yeast).